The sequence spans 1055 residues: Error-prone DNA polymerase (1055 aa).

Belongs to the DNA polymerase type-C family. DnaE2 subfamily.

It is found in the cytoplasm. It carries out the reaction DNA(n) + a 2'-deoxyribonucleoside 5'-triphosphate = DNA(n+1) + diphosphate. Functionally, DNA polymerase involved in damage-induced mutagenesis and translesion synthesis (TLS). It is not the major replicative DNA polymerase. In Corynebacterium glutamicum (strain ATCC 13032 / DSM 20300 / JCM 1318 / BCRC 11384 / CCUG 27702 / LMG 3730 / NBRC 12168 / NCIMB 10025 / NRRL B-2784 / 534), this protein is Error-prone DNA polymerase.